A 515-amino-acid chain; its full sequence is Cytoplasmic tRNA 2-thiolation protein 2 (515 aa).

Disordered stretches follow at residues 1–24 (MCQVGEDYGEPAPEEPPPAPRPSR) and 188–217 (LGAGGGPGPTQGEEQPPQPPLDPQNLARPP). C2 carries the post-translational modification N-acetylcysteine. 4 positions are modified to phosphoserine: S415, S419, S435, and S508.

This sequence belongs to the CTU2/NCS2 family. As to quaternary structure, component of a complex at least composed of URM1, CTU2/NCS2 and CTU1/ATPBD3.

Its subcellular location is the cytoplasm. Its pathway is tRNA modification; 5-methoxycarbonylmethyl-2-thiouridine-tRNA biosynthesis. Its function is as follows. Plays a central role in 2-thiolation of mcm(5)S(2)U at tRNA wobble positions of tRNA(Lys), tRNA(Glu) and tRNA(Gln). May act by forming a heterodimer with CTU1/ATPBD3 that ligates sulfur from thiocarboxylated URM1 onto the uridine of tRNAs at wobble position. This chain is Cytoplasmic tRNA 2-thiolation protein 2, found in Homo sapiens (Human).